A 340-amino-acid polypeptide reads, in one-letter code: Glycerol-3-phosphate dehydrogenase [NAD(P)+] (340 aa).

NADPH is bound by residues Ser-11, Trp-12, Arg-33, and Lys-106. 3 residues coordinate sn-glycerol 3-phosphate: Lys-106, Gly-137, and Ser-139. Position 141 (Ala-141) interacts with NADPH. Residues Lys-192, Asp-245, Ser-255, Arg-256, and Asn-257 each coordinate sn-glycerol 3-phosphate. The Proton acceptor role is filled by Lys-192. Arg-256 is a binding site for NADPH. NADPH-binding residues include Val-280 and Glu-282.

Belongs to the NAD-dependent glycerol-3-phosphate dehydrogenase family.

It is found in the cytoplasm. It catalyses the reaction sn-glycerol 3-phosphate + NAD(+) = dihydroxyacetone phosphate + NADH + H(+). The catalysed reaction is sn-glycerol 3-phosphate + NADP(+) = dihydroxyacetone phosphate + NADPH + H(+). It functions in the pathway membrane lipid metabolism; glycerophospholipid metabolism. Its function is as follows. Catalyzes the reduction of the glycolytic intermediate dihydroxyacetone phosphate (DHAP) to sn-glycerol 3-phosphate (G3P), the key precursor for phospholipid synthesis. In Bacillus anthracis (strain A0248), this protein is Glycerol-3-phosphate dehydrogenase [NAD(P)+].